The following is a 156-amino-acid chain: Small ribosomal subunit protein bS16 (156 aa).

The tract at residues 114 to 156 is disordered; the sequence is ENEPVAEAITPKKKKAAKADEAKAEDTAADAEAPAADAEAADK. Positions 130–139 are enriched in basic and acidic residues; sequence AKADEAKAED. Residues 143 to 156 are compositionally biased toward low complexity; it reads DAEAPAADAEAADK.

The protein belongs to the bacterial ribosomal protein bS16 family.

This chain is Small ribosomal subunit protein bS16, found in Rhodococcus erythropolis (strain PR4 / NBRC 100887).